Reading from the N-terminus, the 325-residue chain is Phospholipid phosphatase-related protein type 1 (325 aa).

Asn5 carries an N-linked (GlcNAc...) asparagine glycan. The next 3 helical transmembrane spans lie at 13-33 (IIPCFIFVELVIMAGTVLLAY), 67-87 (FISPLVLYCVLAATPTAIIFI), and 127-147 (FIGVFAFGLFATDIFVNAGQV). The N-linked (GlcNAc...) asparagine glycan is linked to Asn163. A run of 3 helical transmembrane segments spans residues 201 to 218 (AALSIYSALYATMYITST), 230 to 247 (VLCLGTLCTAFLTGLNRV), and 257 to 277 (VIAGFILGTAVALFLGMCVVH). Phosphoserine is present on Ser307. Asn316 is a glycosylation site (N-linked (GlcNAc...) asparagine).

The protein belongs to the PA-phosphatase related phosphoesterase family.

The protein resides in the cell membrane. It localises to the cell projection. It is found in the neuron projection. In terms of biological role, may play a role in neurite outgrowth and neurogenesis. The protein is Phospholipid phosphatase-related protein type 1 of Mus musculus (Mouse).